The chain runs to 344 residues: Protein YRO2 (344 aa).

The Extracellular segment spans residues 1-34 (MSDYVELLKRGGNEAIKINPPTGADFHITSRGSD). The chain crosses the membrane as a helical span at residues 35–55 (WLFTVFCVNLLFGVILVPLMF). Residues 56–62 (RKPVKDR) are Cytoplasmic-facing. The helical transmembrane segment at 63–83 (FVYYTAIAPNLFMSIAYFTMA) threads the bilayer. Residues 84–119 (SNLGWIPVRAKYNHVQTSTQKEHPGYRQIFYARYVG) are Extracellular-facing. Residues 120 to 140 (WFLAFPWPIIQMSLLGGTPLW) form a helical membrane-spanning segment. Position 141 (Gln-141) is a topological domain, cytoplasmic. A helical membrane pass occupies residues 142–162 (IAFNVGMTEIFTVCWLIAACV). At 163-172 (HSTYKWGYYT) the chain is on the extracellular side. The helical transmembrane segment at 173–193 (IGIGAAIVVCISLMTTTFNLV) threads the bilayer. Over 194–202 (KARGKDVSN) the chain is Cytoplasmic. The chain crosses the membrane as a helical span at residues 203–223 (VFITFMSVIMFLWLIAYPTCF). The Extracellular portion of the chain corresponds to 224–238 (GITDGGNVLQPDSAT). A helical transmembrane segment spans residues 239–259 (IFYGIIDLLILSILPVLFMPL). The Cytoplasmic segment spans residues 260 to 344 (ANYLGIERLG…EEEDVATDSE (85 aa)). A disordered region spans residues 282–344 (PVAEKKMPSP…EEEDVATDSE (63 aa)). Lys-286 participates in a covalent cross-link: Glycyl lysine isopeptide (Lys-Gly) (interchain with G-Cter in ubiquitin). Ser-293 is subject to Phosphoserine. A compositionally biased stretch (basic and acidic residues) spans 297–306 (SDSDSSIKEK). Over residues 307-330 (LKLKKKHKKDKKKAKKAKKAKKAK) the composition is skewed to basic residues. Residues 334–344 (EEEEDVATDSE) are compositionally biased toward acidic residues. At Thr-341 the chain carries Phosphothreonine. Ser-343 carries the phosphoserine modification.

Belongs to the archaeal/bacterial/fungal opsin family.

Its subcellular location is the membrane. The chain is Protein YRO2 (YRO2) from Saccharomyces cerevisiae (strain ATCC 204508 / S288c) (Baker's yeast).